The sequence spans 643 residues: Probable potassium transport system protein Kup (643 aa).

The span at 1-12 shows a compositional bias: basic and acidic residues; the sequence is MSISSKTEDSDI. Positions 1–20 are disordered; the sequence is MSISSKTEDSDIRSSVMTDH. The next 12 helical transmembrane spans lie at 28-48, 65-85, 121-141, 158-178, 187-207, 224-244, 268-288, 301-321, 358-378, 384-404, 415-435, and 440-460; these read LAGL…TSPL, AGNV…IVGL, WLLV…GMIT, PAFH…LFLF, GALF…LGII, GISF…AVFL, WFLL…ALLL, LVPS…TIIA, IYVP…VAWF, LAAA…ILFY, PAAL…FFGA, and LFHG…IMNT.

Belongs to the HAK/KUP transporter (TC 2.A.72) family.

It localises to the cell inner membrane. The catalysed reaction is K(+)(in) + H(+)(in) = K(+)(out) + H(+)(out). Functionally, transport of potassium into the cell. Likely operates as a K(+):H(+) symporter. The polypeptide is Probable potassium transport system protein Kup (Chlorobium luteolum (strain DSM 273 / BCRC 81028 / 2530) (Pelodictyon luteolum)).